The sequence spans 334 residues: Ornithine carbamoyltransferase (334 aa).

Carbamoyl phosphate is bound by residues 57–60, Q84, R108, and 135–138; these read STRT and HPTQ. L-ornithine-binding positions include N169, D233, and 237 to 238; that span reads SM. Residues 275–276 and R320 contribute to the carbamoyl phosphate site; that span reads CL.

The protein belongs to the aspartate/ornithine carbamoyltransferase superfamily. OTCase family.

It localises to the cytoplasm. It catalyses the reaction carbamoyl phosphate + L-ornithine = L-citrulline + phosphate + H(+). Its pathway is amino-acid biosynthesis; L-arginine biosynthesis; L-arginine from L-ornithine and carbamoyl phosphate: step 1/3. Its function is as follows. Reversibly catalyzes the transfer of the carbamoyl group from carbamoyl phosphate (CP) to the N(epsilon) atom of ornithine (ORN) to produce L-citrulline. This Vibrio campbellii (strain ATCC BAA-1116) protein is Ornithine carbamoyltransferase.